Reading from the N-terminus, the 566-residue chain is Arginine--tRNA ligase (566 aa).

Residues 121-131 carry the 'HIGH' region motif; it reads ANPNGPFHIGH.

The protein belongs to the class-I aminoacyl-tRNA synthetase family.

The protein localises to the cytoplasm. The catalysed reaction is tRNA(Arg) + L-arginine + ATP = L-arginyl-tRNA(Arg) + AMP + diphosphate. This chain is Arginine--tRNA ligase, found in Methanococcus maripaludis (strain C7 / ATCC BAA-1331).